The primary structure comprises 288 residues: 4-hydroxy-tetrahydrodipicolinate synthase (288 aa).

T47 contributes to the pyruvate binding site. The Proton donor/acceptor role is filled by Y136. Residue K164 is the Schiff-base intermediate with substrate of the active site. I204 provides a ligand contact to pyruvate.

The protein belongs to the DapA family. In terms of assembly, homotetramer; dimer of dimers.

It localises to the cytoplasm. It carries out the reaction L-aspartate 4-semialdehyde + pyruvate = (2S,4S)-4-hydroxy-2,3,4,5-tetrahydrodipicolinate + H2O + H(+). Its pathway is amino-acid biosynthesis; L-lysine biosynthesis via DAP pathway; (S)-tetrahydrodipicolinate from L-aspartate: step 3/4. Its function is as follows. Catalyzes the condensation of (S)-aspartate-beta-semialdehyde [(S)-ASA] and pyruvate to 4-hydroxy-tetrahydrodipicolinate (HTPA). This is 4-hydroxy-tetrahydrodipicolinate synthase from Leuconostoc mesenteroides subsp. mesenteroides (strain ATCC 8293 / DSM 20343 / BCRC 11652 / CCM 1803 / JCM 6124 / NCDO 523 / NBRC 100496 / NCIMB 8023 / NCTC 12954 / NRRL B-1118 / 37Y).